Reading from the N-terminus, the 531-residue chain is UDP-glucuronosyltransferase 1A6 (531 aa).

A signal peptide spans 1–26 (MACLLPAAQTLPAGFLFLVLWASVLG). N-linked (GlcNAc...) asparagine glycosylation is found at N293 and N431. Residues 489 to 505 (VIGFLLAIVLTVVFIVF) traverse the membrane as a helical segment.

This sequence belongs to the UDP-glycosyltransferase family. As to expression, expressed in liver, kidney and at very low levels in colon.

It localises to the microsome. The protein resides in the endoplasmic reticulum membrane. The catalysed reaction is glucuronate acceptor + UDP-alpha-D-glucuronate = acceptor beta-D-glucuronoside + UDP + H(+). It carries out the reaction (5Z,8Z,11Z,14Z)-eicosatetraenoate + UDP-alpha-D-glucuronate = O-[(5Z),(8Z),(11Z),(14Z)-eicosatetraenoyl]-beta-D-glucuronate + UDP. The enzyme catalyses 15-hydroxy-(5Z,8Z,11Z,13E)-eicosatetraenoate + UDP-alpha-D-glucuronate = 15-O-(beta-D-glucuronosyl)-(5Z,8Z,11Z,14Z)-eicosatetraenoate + UDP + H(+). It catalyses the reaction (E)-ferulate + UDP-alpha-D-glucuronate = (E)-4-O-(beta-D-glucuronosyl)-ferulate + UDP + H(+). The catalysed reaction is (E)-ferulate + UDP-alpha-D-glucuronate = (E)-ferulic acid beta-D-glucuronate ester + UDP. UDP-glucuronosyltransferase (UGT) that catalyzes phase II biotransformation reactions in which lipophilic substrates are conjugated with glucuronic acid to facilitate their inactivation and excretion from the body. Essential for the elimination and detoxification of drugs, xenobiotics and endogenous compounds. Involved in the glucuronidation of arachidonic acid (AA) and AA-derived eicosanoids including 15-HETE and 20-HETE. Conjugates small planar phenolic molecules such as 4-nitrophenol, 1-naphthol, and 4-methylumbelliferone. The bulky phenol 4-hydroxybiphenyl, androgens and estrogens are not substrates. 2-hydroxybiphenyl is an excellent substrate. Involved in the glucuronidation of the phytochemical ferulic acid at the phenolic or the carboxylic acid group. The protein is UDP-glucuronosyltransferase 1A6 of Mus musculus (Mouse).